Reading from the N-terminus, the 229-residue chain is Prolactin (229 aa).

A signal peptide spans 1 to 30; sequence MSNRGASLKGLFLAVLLVSNTLLTKEGVTS. 3 cysteine pairs are disulfide-bonded: cysteine 34–cysteine 41, cysteine 88–cysteine 204, and cysteine 221–cysteine 229.

Belongs to the somatotropin/prolactin family.

The protein localises to the secreted. This is Prolactin (PRL) from Gallus gallus (Chicken).